The following is a 459-amino-acid chain: uncharacterized protein (459 aa).

In terms of domain architecture, TRAM spans Pro-5 to Lys-63. Cys-76, Cys-82, Cys-85, and Cys-166 together coordinate [4Fe-4S] cluster. Positions 290, 319, 340, and 388 each coordinate S-adenosyl-L-methionine. The active-site Nucleophile is the Cys-415.

This sequence belongs to the class I-like SAM-binding methyltransferase superfamily. RNA M5U methyltransferase family.

This is an uncharacterized protein from Listeria monocytogenes serotype 4b (strain F2365).